We begin with the raw amino-acid sequence, 101 residues long: NADH-quinone oxidoreductase subunit K (101 aa).

The next 3 helical transmembrane spans lie at Leu4–Leu24, Ile30–Phe50, and Phe65–Phe85.

It belongs to the complex I subunit 4L family. NDH-1 is composed of 14 different subunits. Subunits NuoA, H, J, K, L, M, N constitute the membrane sector of the complex.

Its subcellular location is the cell inner membrane. It carries out the reaction a quinone + NADH + 5 H(+)(in) = a quinol + NAD(+) + 4 H(+)(out). In terms of biological role, NDH-1 shuttles electrons from NADH, via FMN and iron-sulfur (Fe-S) centers, to quinones in the respiratory chain. The immediate electron acceptor for the enzyme in this species is believed to be ubiquinone. Couples the redox reaction to proton translocation (for every two electrons transferred, four hydrogen ions are translocated across the cytoplasmic membrane), and thus conserves the redox energy in a proton gradient. This chain is NADH-quinone oxidoreductase subunit K, found in Cereibacter sphaeroides (strain ATCC 17029 / ATH 2.4.9) (Rhodobacter sphaeroides).